The following is a 222-amino-acid chain: Protein GrpE (222 aa).

The protein belongs to the GrpE family. Homodimer.

It is found in the cytoplasm. Participates actively in the response to hyperosmotic and heat shock by preventing the aggregation of stress-denatured proteins, in association with DnaK and GrpE. It is the nucleotide exchange factor for DnaK and may function as a thermosensor. Unfolded proteins bind initially to DnaJ; upon interaction with the DnaJ-bound protein, DnaK hydrolyzes its bound ATP, resulting in the formation of a stable complex. GrpE releases ADP from DnaK; ATP binding to DnaK triggers the release of the substrate protein, thus completing the reaction cycle. Several rounds of ATP-dependent interactions between DnaJ, DnaK and GrpE are required for fully efficient folding. This is Protein GrpE from Bartonella bacilliformis (strain ATCC 35685 / KC583 / Herrer 020/F12,63).